Here is a 408-residue protein sequence, read N- to C-terminus: Putative polysaccharide ligase RBE_0399 (408 aa).

10 helical membrane passes run 5-25 (FFIFLVPSLGMVAGLSVAATV), 72-92 (MTIKTELLFAGWCLISCLFAI), 94-114 (PINSLINFVQVFTILFLGFVV), 130-150 (LIFGTLTGILLFFVEYFSYGF), 163-183 (MLDRGCALLSITAWVVIAILI), 192-212 (LILYILVLYLLSISDSLASFL), 230-250 (IFSKLIIFGLITGSLLFPIIA), 325-345 (ILQITLELGLIGLALFLSLVY), 359-377 (FRASSYACFINYYIIGMIS), and 380-400 (VWQIWWIASSIWVLILMKLLV).

It belongs to the O-antigen ligase family.

The protein localises to the membrane. This is Putative polysaccharide ligase RBE_0399 (rfaL) from Rickettsia bellii (strain RML369-C).